Reading from the N-terminus, the 641-residue chain is Sodium-dependent nutrient amino acid transporter 1 (641 aa).

Residues 1 to 21 show a composition bias toward polar residues; the sequence is MELKNIEQQPQLQNGNGTATE. A disordered region spans residues 1–37; that stretch reads MELKNIEQQPQLQNGNGTATENNEKGEQKPTEGGERT. Residues 1 to 38 are Cytoplasmic-facing; it reads MELKNIEQQPQLQNGNGTATENNEKGEQKPTEGGERTN. Over residues 22–35 the composition is skewed to basic and acidic residues; the sequence is NNEKGEQKPTEGGE. Transmembrane regions (helical) follow at residues 39 to 59, 72 to 92, and 125 to 145; these read WGNGLEFLMSCISVSVGLGNV, GAFLIPYIIVLFLIGKPMYYL, and TVCIISYYSSLLALTLYYLFV. N-linked (GlcNAc...) asparagine glycans are attached at residues Asn181, Asn190, and Asn198. A run of 9 helical transmembrane segments spans residues 229 to 249, 258 to 278, 307 to 327, 341 to 361, 401 to 421, 441 to 461, 474 to 494, 516 to 536, and 552 to 572; these read PDWKLTLALLVSWIVTFLVIM, AAYFLAIFPYVVLFVLLGRAV, AVVQCFFSLAVSCGPIIMFAS, IVTTLDTLTSLLGGITIFAIL, LFSVLFFFMLFVLGIGSIVAL, VALVTSICGFLLGLVYVTPGG, TYVVFILAIFELAGIVWIYGL, CWSFFTPVMMIIIFIYSMATI, and IAGWIVFAIGTAQFPLWGIWY.

The protein belongs to the sodium:neurotransmitter symporter (SNF) (TC 2.A.22) family.

The protein localises to the membrane. Functionally, unusual broad substrate spectrum amino acid:sodium cotransporter that promotes absorption of the D isomers of essential amino acids. Neutral amino acids are the preferred substrates, especially methionine and phenylalanine. The sequence is that of Sodium-dependent nutrient amino acid transporter 1 from Drosophila willistoni (Fruit fly).